We begin with the raw amino-acid sequence, 255 residues long: Tabinhibitin 2 (255 aa).

An N-terminal signal peptide occupies residues 1-23 (MISILVSRFLLAALVLQYATIDA). A Cell attachment site motif is present at residues 32 to 34 (RGD). Residues 67–211 (LSKINDVRDH…KARALLTCNF (145 aa)) enclose the SCP domain.

Belongs to the CRISP family. As to expression, expressed in salivary glands.

Its subcellular location is the secreted. Inhibits platelet aggregation induced by all agonists tested (ADP, arachidonic acid, the thromboxane A2 analog U46619, thrombin, and snake venom snaclecs (TMVA that activates platelet through GPIB, and stejnulxin that specifically acts through GPVI (GP6))). May act by competing with fibrinogen for binding to glycoprotein IIb/IIIa (ITGA2B/ITGB3). In Tabanus yao (Horsefly), this protein is Tabinhibitin 2.